The sequence spans 109 residues: uncharacterized protein (109 aa).

2 helical membrane passes run 24 to 44 (SLGI…SAFV) and 68 to 88 (VIVL…SIFI).

It localises to the membrane. This is an uncharacterized protein from Saccharomyces cerevisiae (strain ATCC 204508 / S288c) (Baker's yeast).